The sequence spans 1234 residues: ATP-dependent helicase/nuclease subunit A (1234 aa).

The UvrD-like helicase ATP-binding domain maps to 2–475; it reads TQFTTSQQAA…IILAENFRST (474 aa). 23–30 contacts ATP; sequence ASAGSGKT. The UvrD-like helicase C-terminal domain occupies 507–806; that stretch reads YGALDYGDAH…KLMTIHKSKG (300 aa).

The protein belongs to the helicase family. AddA subfamily. In terms of assembly, heterodimer of AddA and AddB/RexB. Mg(2+) is required as a cofactor.

The enzyme catalyses Couples ATP hydrolysis with the unwinding of duplex DNA by translocating in the 3'-5' direction.. It carries out the reaction ATP + H2O = ADP + phosphate + H(+). The heterodimer acts as both an ATP-dependent DNA helicase and an ATP-dependent, dual-direction single-stranded exonuclease. Recognizes the chi site generating a DNA molecule suitable for the initiation of homologous recombination. The AddA nuclease domain is required for chi fragment generation; this subunit has the helicase and 3' -&gt; 5' nuclease activities. The protein is ATP-dependent helicase/nuclease subunit A of Lacticaseibacillus paracasei (strain ATCC 334 / BCRC 17002 / CCUG 31169 / CIP 107868 / KCTC 3260 / NRRL B-441) (Lactobacillus paracasei).